Here is a 1180-residue protein sequence, read N- to C-terminus: RecBCD enzyme subunit RecB (1180 aa).

A UvrD-like helicase ATP-binding domain is found at 2–450 (SDVAETLDPL…YTLDTNWRSA (449 aa)). The tract at residues 2–853 (SDVAETLDPL…KGEPQDAAGL (852 aa)) is ATPase, DNA-binding and helicase activity, interacts with RecC. 23–30 (ASAGTGKT) contributes to the ATP binding site. Residues 252 to 254 (IDR) mediate DNA binding. Position 447 (Trp-447) interacts with ATP. A UvrD-like helicase C-terminal domain is found at 480 to 746 (SAGKNQALRF…QIVTIHKSKG (267 aa)). 3 DNA-binding regions span residues 511–512 (VG), 560–561 (SR), and Arg-761. Residues 900 to 1180 (NWRVTSYSGL…MFAGMTLEEA (281 aa)) form a nuclease activity, interacts with RecD and RecA region. Mg(2+) contacts are provided by His-956, Asp-1067, Asp-1080, and Tyr-1081. Asp-1080 serves as the catalytic For nuclease activity.

It belongs to the helicase family. UvrD subfamily. As to quaternary structure, heterotrimer of RecB, RecC and RecD. All subunits contribute to DNA-binding. The C-terminus interacts with RecA. Interacts with YgbT (Cas1). In terms of assembly, (Microbial infection) Lambda virus GamS protein interacts with the enzyme without displacing any of the subunits. It depends on Mg(2+) as a cofactor.

It carries out the reaction Exonucleolytic cleavage (in the presence of ATP) in either 5'- to 3'- or 3'- to 5'-direction to yield 5'-phosphooligonucleotides.. The enzyme catalyses Couples ATP hydrolysis with the unwinding of duplex DNA by translocating in the 3'-5' direction.. It catalyses the reaction ATP + H2O = ADP + phosphate + H(+). With respect to regulation, after reacting with DNA bearing a Chi site the holoenzyme is disassembled and loses exonuclease activity, DNA unwinding and Chi-directed DNA cleavage; RecB remains complexed with ssDNA, which may prevent holoenzyme reassembly. High levels of Mg(2+) (13 mM MgCl(2+)) or incubation with DNase allows holoenzyme reassembly, suggesting it is DNA bound to RecB that prevents reassembly. (Microbial infection) RecBCD is inhibited by the lambda virus gam protein (both GamL and GamS isoforms); in vitro a short preincubation prior to adding DNA results in maximal inhibition. A helicase/nuclease that prepares dsDNA breaks (DSB) for recombinational DNA repair. Binds to DSBs and unwinds DNA via a rapid (&gt;1 kb/second) and highly processive (&gt;30 kb) ATP-dependent bidirectional helicase. Unwinds dsDNA until it encounters a Chi (crossover hotspot instigator, 5'-GCTGGTGG-3') sequence from the 3' direction. Cuts ssDNA a few nucleotides 3' to Chi site, by nicking one strand or switching the strand degraded (depending on the reaction conditions). The properties and activities of the enzyme are changed at Chi. The Chi-altered holoenzyme produces a long 3'-ssDNA overhang which facilitates RecA-binding to the ssDNA for homologous DNA recombination and repair. Holoenzyme degrades any linearized DNA that is unable to undergo homologous recombination. In the holoenzyme this subunit contributes ATPase, 3'-5' helicase, exonuclease activity and loads RecA onto ssDNA. The RecBC complex requires the RecD subunit for nuclease activity, but can translocate along ssDNA in both directions. The RecBCD complex does not unwind G-quadruplex DNA. Probably interacts with a component of retron Ec48 which moniters RecBCD stability; when RecB is missing or impaired the retron is activated and becomes toxic. The sequence is that of RecBCD enzyme subunit RecB from Escherichia coli (strain K12).